The following is a 239-amino-acid chain: Zinc finger protein 575 (239 aa).

Residues 1–62 (MLGGSVKSEV…PQRPHRCPDC (62 aa)) form a disordered region. Residues 22 to 31 (PETKAPHQDL) are compositionally biased toward basic and acidic residues. Basic residues predominate over residues 46 to 57 (RPRRRPPPQRPH). 6 consecutive C2H2-type zinc fingers follow at residues 57-79 (HRCP…RLAH), 85-107 (HPCP…RLTH), 113-135 (HSCP…LWTH), 141-163 (YPCP…RHTH), 171-193 (YPCP…RLCH), and 207-230 (HRCS…RSHH).

The protein belongs to the krueppel C2H2-type zinc-finger protein family.

It is found in the nucleus. Its function is as follows. May be involved in transcriptional regulation. This chain is Zinc finger protein 575 (Znf575), found in Mus musculus (Mouse).